The primary structure comprises 625 residues: Probable potassium transport system protein Kup 1 (625 aa).

12 helical membrane-spanning segments follow: residues 14 to 34, 50 to 70, 104 to 124, 139 to 159, 170 to 190, 213 to 233, 249 to 269, 287 to 307, 339 to 359, 368 to 388, 396 to 416, and 421 to 441; these read LSLLALSALGIVFGDIGTSPL, AAAVLGALSLVIWTLFIITTV, IVALGLFGAALIYGDGAITPA, PALQPYVVPAAVVILLALFAI, LFGPVMLLWFVTIAVLGLVGI, GATGFLVLGSVFLCVTGAEAL, WFAVVFPSLIINYAGQAALVI, LLLPLIGLATLATIIASQSVI, IYVGAVNWLLMLVTVSLTIGF, AYGIAVSLTMLMTSALLFIAM, LLAAGAVAGVFLTIDSAFFLA, and IAEGGYVPLLLATSVYGLMWI.

The protein belongs to the HAK/KUP transporter (TC 2.A.72) family.

The protein resides in the cell inner membrane. It carries out the reaction K(+)(in) + H(+)(in) = K(+)(out) + H(+)(out). Transport of potassium into the cell. Likely operates as a K(+):H(+) symporter. This chain is Probable potassium transport system protein Kup 1, found in Bradyrhizobium sp. (strain ORS 278).